A 114-amino-acid chain; its full sequence is N(4)-acetylcytidine amidohydrolase (114 aa).

The region spanning Thr-8–Ile-93 is the ASCH domain. Residue Lys-22 is the Proton acceptor of the active site. The active-site Nucleophile is the Thr-25. Residue Glu-75 is the Proton donor of the active site.

It belongs to the N(4)-acetylcytidine amidohydrolase family.

It carries out the reaction N(4)-acetylcytidine + H2O = cytidine + acetate + H(+). The enzyme catalyses N(4)-acetyl-2'-deoxycytidine + H2O = 2'-deoxycytidine + acetate + H(+). It catalyses the reaction N(4)-acetylcytosine + H2O = cytosine + acetate + H(+). In terms of biological role, catalyzes the hydrolysis of N(4)-acetylcytidine (ac4C). The polypeptide is N(4)-acetylcytidine amidohydrolase (Vibrio cholerae serotype O1 (strain ATCC 39541 / Classical Ogawa 395 / O395)).